The primary structure comprises 71 residues: Cell division protein ZapB (71 aa).

A coiled-coil region spans residues 5–67; that stretch reads LEVLEQLESK…RALLGKMEQM (63 aa).

Belongs to the ZapB family. In terms of assembly, homodimer. The ends of the coiled-coil dimer bind to each other, forming polymers. Interacts with FtsZ.

The protein resides in the cytoplasm. Functionally, non-essential, abundant cell division factor that is required for proper Z-ring formation. It is recruited early to the divisome by direct interaction with FtsZ, stimulating Z-ring assembly and thereby promoting cell division earlier in the cell cycle. Its recruitment to the Z-ring requires functional FtsA or ZipA. This Aeromonas salmonicida (strain A449) protein is Cell division protein ZapB.